The chain runs to 315 residues: Probable cell division protein WhiA (315 aa).

A DNA-binding region (H-T-H motif) is located at residues 275–309 (TLKELGEMVSSGTVSKSGVNHRLRKIDEIADALRR).

This sequence belongs to the WhiA family.

Functionally, involved in cell division and chromosome segregation. The protein is Probable cell division protein WhiA of Lysinibacillus sphaericus (strain C3-41).